Reading from the N-terminus, the 267-residue chain is GTP cyclohydrolase MptA (267 aa).

Belongs to the GTP cyclohydrolase IV family. In terms of assembly, homodimer. The cofactor is Fe(2+).

It catalyses the reaction GTP + H2O = 7,8-dihydroneopterin 2',3'-cyclic phosphate + formate + diphosphate + H(+). Its pathway is cofactor biosynthesis; 5,6,7,8-tetrahydromethanopterin biosynthesis. Its function is as follows. Converts GTP to 7,8-dihydro-D-neopterin 2',3'-cyclic phosphate, the first intermediate in the biosynthesis of coenzyme methanopterin. The chain is GTP cyclohydrolase MptA from Thermococcus kodakarensis (strain ATCC BAA-918 / JCM 12380 / KOD1) (Pyrococcus kodakaraensis (strain KOD1)).